The chain runs to 276 residues: NADPH-dependent 7-cyano-7-deazaguanine reductase (276 aa).

Residue 83–85 (IES) coordinates substrate. 85 to 86 (SK) provides a ligand contact to NADPH. Residue Cys-184 is the Thioimide intermediate of the active site. Asp-191 (proton donor) is an active-site residue. 223 to 224 (HE) contributes to the substrate binding site. 252-253 (RG) serves as a coordination point for NADPH.

The protein belongs to the GTP cyclohydrolase I family. QueF type 2 subfamily. In terms of assembly, homodimer.

It is found in the cytoplasm. The catalysed reaction is 7-aminomethyl-7-carbaguanine + 2 NADP(+) = 7-cyano-7-deazaguanine + 2 NADPH + 3 H(+). Its pathway is tRNA modification; tRNA-queuosine biosynthesis. Functionally, catalyzes the NADPH-dependent reduction of 7-cyano-7-deazaguanine (preQ0) to 7-aminomethyl-7-deazaguanine (preQ1). This Pseudomonas syringae pv. tomato (strain ATCC BAA-871 / DC3000) protein is NADPH-dependent 7-cyano-7-deazaguanine reductase.